We begin with the raw amino-acid sequence, 427 residues long: MESLTLQPIARVDGTINLPGSKSVSNRALLLAALAHGKTVLTNLLDSDDVRHMLNALTALGVSYTLSADRTRCEIIGNGGPLHAEGALELFLGNAGTAMRPLAAALCLGSNDIVLTGEPRMKERPIGHLVDALRLGGAKITYLEQENYPPLRLQGGFTGGNVDVDGSVSSQFLTALLMTAPLAPEDTVIRIKGDLVSKPYIDITLNLMKTFGVEIENQHYQQFVVKGGQSYQSPGTYLVEGDASSASYFLAAAAIKGGTVKVTGIGRNSMQGDIRFADVLEKMGATICWGDDYISCTRGELNAIDMDMNHIPDAAMTIATAALFAKGTTTLRNIYNWRVKETDRLFAMATELRKVGAEVEEGHDYIRITPPEKLNFAEIATYNDHRMAMCFSLVALSDTPVTILDPKCTAKTFPDYFEQLARISQAA.

3-phosphoshikimate is bound by residues Lys-22, Ser-23, and Arg-27. Lys-22 lines the phosphoenolpyruvate pocket. 2 residues coordinate phosphoenolpyruvate: Gly-96 and Arg-124. The 3-phosphoshikimate site is built by Ser-169, Ser-170, Gln-171, Ser-197, Asp-313, Asn-336, and Lys-340. Residue Gln-171 participates in phosphoenolpyruvate binding. Residue Asp-313 is the Proton acceptor of the active site. Arg-344, Arg-386, and Lys-411 together coordinate phosphoenolpyruvate.

Belongs to the EPSP synthase family. In terms of assembly, monomer.

The protein localises to the cytoplasm. It carries out the reaction 3-phosphoshikimate + phosphoenolpyruvate = 5-O-(1-carboxyvinyl)-3-phosphoshikimate + phosphate. It functions in the pathway metabolic intermediate biosynthesis; chorismate biosynthesis; chorismate from D-erythrose 4-phosphate and phosphoenolpyruvate: step 6/7. Functionally, catalyzes the transfer of the enolpyruvyl moiety of phosphoenolpyruvate (PEP) to the 5-hydroxyl of shikimate-3-phosphate (S3P) to produce enolpyruvyl shikimate-3-phosphate and inorganic phosphate. In Escherichia coli O8 (strain IAI1), this protein is 3-phosphoshikimate 1-carboxyvinyltransferase.